The primary structure comprises 461 residues: uncharacterized protein (461 aa).

Over residues 1 to 19 (MEKCSHESGRHSAENDGKY) the composition is skewed to basic and acidic residues. A disordered region spans residues 1–21 (MEKCSHESGRHSAENDGKYDI).

This sequence belongs to the CapA family.

Functionally, could be involved in the biosynthesis of a cell wall component. This is an uncharacterized protein from Sinorhizobium fredii (strain NBRC 101917 / NGR234).